The sequence spans 411 residues: Serine hydroxymethyltransferase (411 aa).

Residues L117 and 121-123 (GHL) contribute to the (6S)-5,6,7,8-tetrahydrofolate site. The residue at position 226 (K226) is an N6-(pyridoxal phosphate)lysine.

The protein belongs to the SHMT family. In terms of assembly, homodimer. It depends on pyridoxal 5'-phosphate as a cofactor.

The protein resides in the cytoplasm. It catalyses the reaction (6R)-5,10-methylene-5,6,7,8-tetrahydrofolate + glycine + H2O = (6S)-5,6,7,8-tetrahydrofolate + L-serine. It functions in the pathway one-carbon metabolism; tetrahydrofolate interconversion. Its pathway is amino-acid biosynthesis; glycine biosynthesis; glycine from L-serine: step 1/1. In terms of biological role, catalyzes the reversible interconversion of serine and glycine with tetrahydrofolate (THF) serving as the one-carbon carrier. This reaction serves as the major source of one-carbon groups required for the biosynthesis of purines, thymidylate, methionine, and other important biomolecules. Also exhibits THF-independent aldolase activity toward beta-hydroxyamino acids, producing glycine and aldehydes, via a retro-aldol mechanism. The sequence is that of Serine hydroxymethyltransferase from Syntrophobacter fumaroxidans (strain DSM 10017 / MPOB).